Consider the following 225-residue polypeptide: uncharacterized protein (225 aa).

Residues 12–32 traverse the membrane as a helical segment; it reads AGFMMIFVFVIASFLLVLLFF.

The protein localises to the cell membrane. This is an uncharacterized protein from Bacillus subtilis (strain 168).